Reading from the N-terminus, the 326-residue chain is Cyclin-dependent kinase 6 (326 aa).

Met1 is modified (N-acetylmethionine). Phosphotyrosine occurs at positions 13 and 24. The Protein kinase domain occupies 13 to 300 (YECVAEIGEG…AYSALSHPYF (288 aa)). ATP contacts are provided by residues 19–27 (IGEGAYGKV) and Lys43. Residues Thr49 and Thr70 each carry the phosphothreonine modification. The active-site Proton acceptor is Asp145. Phosphothreonine is present on Thr177. Position 264 is an N6-acetyllysine (Lys264). Phosphothreonine is present on Thr325.

It belongs to the protein kinase superfamily. CMGC Ser/Thr protein kinase family. CDC2/CDKX subfamily. In terms of assembly, interaction with D-type G1 cyclins. Cyclin binding promotes enzyme activation by phosphorylation at Thr-177. Binds to RUNX1, CDKN2D, FBXO7 and CDKN2C/p18-INK4c. Forms a cytoplasmic complex with Hsp90/HSP90AB1 and CDC37. FBXO7-binding promotes D-type cyclin binding. Interacts with Kaposi's sarcoma herpesvirus (KSHV) V-cyclin and herpesvirus saimiri (V-cyclin/ECLF2); the CDK6/V-cyclin complex phosphorylates NPM1 and thus lead to viral reactivation by reducing viral LANA levels. In terms of processing, thr-177 phosphorylation and Tyr-24 dephosphorylation promotes kinase activity. Expressed ubiquitously. Accumulates in squamous cell carcinomas, proliferating hematopoietic progenitor cells, beta-cells of pancreatic islets of Langerhans, and neuroblastomas. Reduced levels in differentiating cells.

The protein localises to the cytoplasm. It localises to the nucleus. Its subcellular location is the cell projection. It is found in the ruffle. The protein resides in the cytoskeleton. The protein localises to the microtubule organizing center. It localises to the centrosome. The enzyme catalyses L-seryl-[protein] + ATP = O-phospho-L-seryl-[protein] + ADP + H(+). It carries out the reaction L-threonyl-[protein] + ATP = O-phospho-L-threonyl-[protein] + ADP + H(+). Inhibited by INK4 proteins (CDKN2C/p18-INK4c), aminopurvalanol, PD0332991, 4-(Pyrazol-4-yl)-pyrimidines and fisetin, a flavonol inhibitor. Activated by Thr-177 phosphorylation and Tyr-24 dephosphorylation. Stimulated by cyclin from herpesvirus saimiri (V-cyclin/ECLF2). Rapidly down-regulated prior to cell differentiation (e.g. erythroid and osteoblast). Its function is as follows. Serine/threonine-protein kinase involved in the control of the cell cycle and differentiation; promotes G1/S transition. Phosphorylates pRB/RB1 and NPM1. Interacts with D-type G1 cyclins during interphase at G1 to form a pRB/RB1 kinase and controls the entrance into the cell cycle. Involved in initiation and maintenance of cell cycle exit during cell differentiation; prevents cell proliferation and negatively regulates cell differentiation, but is required for the proliferation of specific cell types (e.g. erythroid and hematopoietic cells). Essential for cell proliferation within the dentate gyrus of the hippocampus and the subventricular zone of the lateral ventricles. Required during thymocyte development. Promotes the production of newborn neurons, probably by modulating G1 length. Promotes, at least in astrocytes, changes in patterns of gene expression, changes in the actin cytoskeleton including loss of stress fibers, and enhanced motility during cell differentiation. Prevents myeloid differentiation by interfering with RUNX1 and reducing its transcription transactivation activity, but promotes proliferation of normal myeloid progenitors. Delays senescence. Promotes the proliferation of beta-cells in pancreatic islets of Langerhans. May play a role in the centrosome organization during the cell cycle phases. In Homo sapiens (Human), this protein is Cyclin-dependent kinase 6 (CDK6).